Here is a 235-residue protein sequence, read N- to C-terminus: Aspartate/glutamate leucyltransferase (235 aa).

Belongs to the R-transferase family. Bpt subfamily.

It is found in the cytoplasm. The catalysed reaction is N-terminal L-glutamyl-[protein] + L-leucyl-tRNA(Leu) = N-terminal L-leucyl-L-glutamyl-[protein] + tRNA(Leu) + H(+). It catalyses the reaction N-terminal L-aspartyl-[protein] + L-leucyl-tRNA(Leu) = N-terminal L-leucyl-L-aspartyl-[protein] + tRNA(Leu) + H(+). Its function is as follows. Functions in the N-end rule pathway of protein degradation where it conjugates Leu from its aminoacyl-tRNA to the N-termini of proteins containing an N-terminal aspartate or glutamate. This chain is Aspartate/glutamate leucyltransferase, found in Pseudomonas aeruginosa (strain LESB58).